An 89-amino-acid chain; its full sequence is Small ribosomal subunit protein uS17 (89 aa).

This sequence belongs to the universal ribosomal protein uS17 family. Part of the 30S ribosomal subunit.

One of the primary rRNA binding proteins, it binds specifically to the 5'-end of 16S ribosomal RNA. The polypeptide is Small ribosomal subunit protein uS17 (Xylella fastidiosa (strain M12)).